The sequence spans 408 residues: Snake venom metalloproteinase BaP1 (408 aa).

The signal sequence occupies residues 1 to 20 (MIEVLLVTICLAVFPYQGSS). Residues 21–191 (IILESGNVND…KASQSNLTPE (171 aa)) constitute a propeptide that is removed on maturation. A Pyrrolidone carboxylic acid modification is found at Gln192. The Peptidase M12B domain occupies 198 to 394 (RYIELAVVAD…HNPQCILNKP (197 aa)). 3 cysteine pairs are disulfide-bonded: Cys309–Cys389, Cys349–Cys373, and Cys351–Cys356. A Zn(2+)-binding site is contributed by His334. Residue Glu335 is part of the active site. Residues His338 and His344 each contribute to the Zn(2+) site. The propeptide occupies 395–408 (LLTVSGNELLEAGE).

It belongs to the venom metalloproteinase (M12B) family. P-I subfamily. Monomer. It depends on Zn(2+) as a cofactor. As to expression, expressed by the venom gland.

It is found in the secreted. With respect to regulation, inhibited by EDTA, partially inhibited by o-phenantropine, and not inhibited by PMSF, pepstatin A, and aprotinin. In terms of biological role, zinc metalloprotease that exhibits a weak hemorrhagic activity (with a minimum hemorrhagic dose of 20 ug by intradermal and intramuscular injection into mice). The basal membrane components collagen (all chains of type IV) (COL4A4), laminin and nidogen are all degraded by this toxin. Rapidly degrades the Aalpha-chain (FGA) of fibrinogen, and later on, degrades the Bbeta-chain (FGB) of fibrinogen. Also activates the complement system, and induces rat neutrophil chemotaxis. Induces edema in mouse food pad and shows a mild myotoxicity. The protein is Snake venom metalloproteinase BaP1 of Bothrops asper (Terciopelo).